The chain runs to 451 residues: MGNLFKFSLNCIKYRSENLEKSKMFYQYFYFHLTLSIVLIYGSDIGKDANEHMSSVPKKIIIEGTRQKRQVVTKLFSPQWSNAKVFYCNADSFSKLQLKKLKLKKNSDTVKRKLMKFAMNFISSQTCVTFEENCTISTRIKFVDSTFCASYVGMINSVQEIYFPDWCMRFGSAVHELMHALGVLHTHARFDRDNFLNVNLNKDDEDDSNFEIVSPPFSINVVPYEYGSTLHYTADVSGTNSLLPKQMEYYRTLGNRRVTFYDMLTINTAYNCKCPSELLCANGGYTNPSNCLECICPLGYGGVLCDRVVACSVQLSADSYWKGSWISVGSSVLRDTTDPVKAFISINAPKDKIIEVKIVKIENFSCDSGCNNNGVEIKYMGDPRITNPIICCENQVDPSNKGYKAKLNPLLINIYTFLGKNKVTFHYRYVNERLSSYNKTTNGYDNYEYYA.

One can recognise a Peptidase M12A domain in the interval 70-273 (QVVTKLFSPQ…LTINTAYNCK (204 aa)). 4 disulfides stabilise this stretch: cysteine 127-cysteine 272, cysteine 148-cysteine 167, cysteine 274-cysteine 291, and cysteine 296-cysteine 305. Asparagine 133 is a glycosylation site (N-linked (GlcNAc...) asparagine). Zn(2+) is bound at residue histidine 175. Glutamate 176 is an active-site residue. Zn(2+) is bound by residues histidine 179 and histidine 185. Residues 267–306 (NTAYNCKCPSELLCANGGYTNPSNCLECICPLGYGGVLCD) form the EGF-like domain. Residues asparagine 363 and asparagine 438 are each glycosylated (N-linked (GlcNAc...) asparagine).

Zn(2+) serves as cofactor.

It localises to the secreted. Functionally, metalloprotease. This Caenorhabditis elegans protein is Zinc metalloproteinase nas-16 (nas-16).